Here is a 402-residue protein sequence, read N- to C-terminus: CCA-adding enzyme (402 aa).

Residues Gly-32 and Arg-35 each coordinate ATP. Residues Gly-32 and Arg-35 each contribute to the CTP site. Mg(2+) contacts are provided by Asp-45 and Asp-47. Arg-119, Asp-162, Arg-165, Arg-168, and Arg-171 together coordinate ATP. Residues Arg-119, Asp-162, Arg-165, Arg-168, and Arg-171 each coordinate CTP.

The protein belongs to the tRNA nucleotidyltransferase/poly(A) polymerase family. Bacterial CCA-adding enzyme type 3 subfamily. As to quaternary structure, homodimer. Requires Mg(2+) as cofactor.

The enzyme catalyses a tRNA precursor + 2 CTP + ATP = a tRNA with a 3' CCA end + 3 diphosphate. The catalysed reaction is a tRNA with a 3' CCA end + 2 CTP + ATP = a tRNA with a 3' CCACCA end + 3 diphosphate. Its function is as follows. Catalyzes the addition and repair of the essential 3'-terminal CCA sequence in tRNAs without using a nucleic acid template. Adds these three nucleotides in the order of C, C, and A to the tRNA nucleotide-73, using CTP and ATP as substrates and producing inorganic pyrophosphate. tRNA 3'-terminal CCA addition is required both for tRNA processing and repair. Also involved in tRNA surveillance by mediating tandem CCA addition to generate a CCACCA at the 3' terminus of unstable tRNAs. While stable tRNAs receive only 3'-terminal CCA, unstable tRNAs are marked with CCACCA and rapidly degraded. The protein is CCA-adding enzyme of Lactococcus lactis subsp. cremoris (strain SK11).